The sequence spans 162 residues: Phosphopantetheine adenylyltransferase (162 aa).

Residue serine 9 coordinates substrate. Residues 9–10 (SF) and histidine 17 each bind ATP. Substrate contacts are provided by lysine 41, leucine 73, and lysine 87. ATP-binding positions include 88-90 (GLR), glutamate 98, and 122-128 (YSFLSSS).

Belongs to the bacterial CoaD family. In terms of assembly, homohexamer. The cofactor is Mg(2+).

Its subcellular location is the cytoplasm. It carries out the reaction (R)-4'-phosphopantetheine + ATP + H(+) = 3'-dephospho-CoA + diphosphate. The protein operates within cofactor biosynthesis; coenzyme A biosynthesis; CoA from (R)-pantothenate: step 4/5. In terms of biological role, reversibly transfers an adenylyl group from ATP to 4'-phosphopantetheine, yielding dephospho-CoA (dPCoA) and pyrophosphate. This is Phosphopantetheine adenylyltransferase from Salinispora tropica (strain ATCC BAA-916 / DSM 44818 / JCM 13857 / NBRC 105044 / CNB-440).